A 201-amino-acid chain; its full sequence is LexA repressor (201 aa).

The segment at residues 28 to 48 (LREIGGHLGINGTLGVMKHLD) is a DNA-binding region (H-T-H motif). Catalysis depends on for autocatalytic cleavage activity residues Ser-120 and Lys-157.

The protein belongs to the peptidase S24 family. In terms of assembly, homodimer.

It carries out the reaction Hydrolysis of Ala-|-Gly bond in repressor LexA.. Represses a number of genes involved in the response to DNA damage (SOS response), including recA and lexA. In the presence of single-stranded DNA, RecA interacts with LexA causing an autocatalytic cleavage which disrupts the DNA-binding part of LexA, leading to derepression of the SOS regulon and eventually DNA repair. The polypeptide is LexA repressor (Geotalea uraniireducens (strain Rf4) (Geobacter uraniireducens)).